We begin with the raw amino-acid sequence, 70 residues long: Large ribosomal subunit protein eL38 (70 aa).

A Glycyl lysine isopeptide (Lys-Gly) (interchain with G-Cter in SUMO2) cross-link involves residue K4. K9 carries the N6-acetyllysine; alternate modification. K9 participates in a covalent cross-link: Glycyl lysine isopeptide (Lys-Gly) (interchain with G-Cter in SUMO2); alternate. K67 carries the N6-acetyllysine modification.

The protein belongs to the eukaryotic ribosomal protein eL38 family. As to quaternary structure, component of the large ribosomal subunit.

The protein localises to the cytoplasm. Functionally, component of the large ribosomal subunit. The ribosome is a large ribonucleoprotein complex responsible for the synthesis of proteins in the cell. The protein is Large ribosomal subunit protein eL38 (Rpl38) of Mus musculus (Mouse).